We begin with the raw amino-acid sequence, 367 residues long: Aminomethyltransferase (367 aa).

It belongs to the GcvT family. In terms of assembly, the glycine cleavage system is composed of four proteins: P, T, L and H.

The enzyme catalyses N(6)-[(R)-S(8)-aminomethyldihydrolipoyl]-L-lysyl-[protein] + (6S)-5,6,7,8-tetrahydrofolate = N(6)-[(R)-dihydrolipoyl]-L-lysyl-[protein] + (6R)-5,10-methylene-5,6,7,8-tetrahydrofolate + NH4(+). Functionally, the glycine cleavage system catalyzes the degradation of glycine. This Lysinibacillus sphaericus (strain C3-41) protein is Aminomethyltransferase.